The sequence spans 273 residues: NH(3)-dependent NAD(+) synthetase (273 aa).

An ATP-binding site is contributed by 34 to 41 (GLSGGIDS). D40 is a binding site for Mg(2+). R116 lines the deamido-NAD(+) pocket. T136 is a binding site for ATP. E141 is a binding site for Mg(2+). 2 residues coordinate ATP: K165 and S187.

The protein belongs to the NAD synthetase family. Homodimer.

The enzyme catalyses deamido-NAD(+) + NH4(+) + ATP = AMP + diphosphate + NAD(+) + H(+). The protein operates within cofactor biosynthesis; NAD(+) biosynthesis; NAD(+) from deamido-NAD(+) (ammonia route): step 1/1. Catalyzes the ATP-dependent amidation of deamido-NAD to form NAD. Uses ammonia as a nitrogen source. The polypeptide is NH(3)-dependent NAD(+) synthetase (Trichlorobacter lovleyi (strain ATCC BAA-1151 / DSM 17278 / SZ) (Geobacter lovleyi)).